The primary structure comprises 558 residues: ATP synthase subunit alpha (558 aa).

172–179 (GDRKTGKT) provides a ligand contact to ATP. The interval 536-558 (ESVKVHQAIPAKTSEKSKNSTPR) is disordered. A compositionally biased stretch (basic and acidic residues) spans 548 to 558 (TSEKSKNSTPR).

It belongs to the ATPase alpha/beta chains family. In terms of assembly, F-type ATPases have 2 components, CF(1) - the catalytic core - and CF(0) - the membrane proton channel. CF(1) has five subunits: alpha(3), beta(3), gamma(1), delta(1), epsilon(1). CF(0) has three main subunits: a(1), b(2) and c(9-12). The alpha and beta chains form an alternating ring which encloses part of the gamma chain. CF(1) is attached to CF(0) by a central stalk formed by the gamma and epsilon chains, while a peripheral stalk is formed by the delta and b chains.

Its subcellular location is the cell membrane. The catalysed reaction is ATP + H2O + 4 H(+)(in) = ADP + phosphate + 5 H(+)(out). Its function is as follows. Produces ATP from ADP in the presence of a proton gradient across the membrane. The alpha chain is a regulatory subunit. The polypeptide is ATP synthase subunit alpha (Mycobacterium leprae (strain Br4923)).